A 140-amino-acid polypeptide reads, in one-letter code: T cell receptor alpha chain constant (140 aa).

An Ig-like C1-type domain is found at 19–107 (KSVCLFTDFD…LVEKSFETDT (89 aa)). Cys22 and Cys72 form a disulfide bridge. N-linked (GlcNAc...) asparagine glycosylation is found at Asn32, Asn66, Asn77, and Asn113. Residues 94 to 115 (CDVKLVEKSFETDTNLNFQNLS) are connecting peptide. A helical membrane pass occupies residues 116–138 (VIGFRILLLKVAGFNLLMTLRLW). At 139 to 140 (SS) the chain is on the cytoplasmic side.

In terms of assembly, alpha-beta TR is a heterodimer composed of an alpha and beta chain; disulfide-linked. The alpha-beta TR is associated with the transmembrane signaling CD3 coreceptor proteins to form the TR-CD3 (TcR or TCR). The assembly of alpha-beta TR heterodimers with CD3 occurs in the endoplasmic reticulum where a single alpha-beta TR heterodimer associates with one CD3D-CD3E heterodimer, one CD3G-CD3E heterodimer and one CD247 homodimer forming a stable octameric structure. CD3D-CD3E and CD3G-CD3E heterodimers preferentially associate with TR alpha and TR beta chains, respectively. The association of the CD247 homodimer is the last step of TcR assembly in the endoplasmic reticulum and is required for transport to the cell surface.

It is found in the cell membrane. In terms of biological role, constant region of T cell receptor (TR) alpha chain. Alpha-beta T cell receptors are antigen specific receptors which are essential to the immune response and are present on the cell surface of T lymphocytes. Recognize peptide-major histocompatibility (MH) (pMH) complexes that are displayed by antigen presenting cells (APC), a prerequisite for efficient T cell adaptive immunity against pathogens. Binding of alpha-beta TR to pMH complex initiates TR-CD3 clustering on the cell surface and intracellular activation of LCK that phosphorylates the ITAM motifs of CD3G, CD3D, CD3E and CD247 enabling the recruitment of ZAP70. In turn, ZAP70 phosphorylates LAT, which recruits numerous signaling molecules to form the LAT signalosome. The LAT signalosome propagates signal branching to three major signaling pathways, the calcium, the mitogen-activated protein kinase (MAPK) kinase and the nuclear factor NF-kappa-B (NF-kB) pathways, leading to the mobilization of transcription factors that are critical for gene expression and essential for T cell growth and differentiation. The T cell repertoire is generated in the thymus, by V-(D)-J rearrangement. This repertoire is then shaped by intrathymic selection events to generate a peripheral T cell pool of self-MH restricted, non-autoaggressive T cells. Post-thymic interaction of alpha-beta TR with the pMH complexes shapes TR structural and functional avidity. The chain is T cell receptor alpha chain constant from Homo sapiens (Human).